The primary structure comprises 44 residues: Small ribosomal subunit protein eS31 (44 aa).

The Zn(2+) site is built by Cys-18, Cys-21, Cys-35, and Cys-38. The C4-type zinc finger occupies 18–38 (CPRCGDTFLAAHDDRQVCGRC).

This sequence belongs to the eukaryotic ribosomal protein eS31 family. As to quaternary structure, part of the 30S ribosomal subunit. Requires Zn(2+) as cofactor.

In Halobacterium salinarum (strain ATCC 29341 / DSM 671 / R1), this protein is Small ribosomal subunit protein eS31.